Here is an 89-residue protein sequence, read N- to C-terminus: Cytochrome c6 (89 aa).

Heme c is bound by residues C15, C18, H19, and M61.

It belongs to the cytochrome c family. PetJ subfamily. As to quaternary structure, monomer. Post-translationally, binds 1 heme c group covalently per subunit.

The protein resides in the plastid. It is found in the chloroplast thylakoid lumen. In terms of biological role, functions as an electron carrier between membrane-bound cytochrome b6-f and photosystem I in oxygenic photosynthesis. In Tetradesmus obliquus (Green alga), this protein is Cytochrome c6 (petJ).